Here is a 395-residue protein sequence, read N- to C-terminus: Elongation factor Tu (395 aa).

In terms of domain architecture, tr-type G spans 10-204; it reads KPHVNIGTIG…VVDEYIPTPV (195 aa). The tract at residues 19–26 is G1; the sequence is GHVDHGKT. Residue 19-26 coordinates GTP; the sequence is GHVDHGKT. Thr-26 provides a ligand contact to Mg(2+). The tract at residues 60 to 64 is G2; that stretch reads GITIN. The tract at residues 81-84 is G3; that stretch reads DAPG. GTP-binding positions include 81 to 85 and 136 to 139; these read DAPGH and NKTD. Residues 136–139 are G4; that stretch reads NKTD. The segment at 174 to 176 is G5; that stretch reads SAL.

This sequence belongs to the TRAFAC class translation factor GTPase superfamily. Classic translation factor GTPase family. EF-Tu/EF-1A subfamily. In terms of assembly, monomer.

It localises to the cytoplasm. It carries out the reaction GTP + H2O = GDP + phosphate + H(+). Functionally, GTP hydrolase that promotes the GTP-dependent binding of aminoacyl-tRNA to the A-site of ribosomes during protein biosynthesis. The protein is Elongation factor Tu of Lactiplantibacillus plantarum (strain ATCC BAA-793 / NCIMB 8826 / WCFS1) (Lactobacillus plantarum).